The sequence spans 729 residues: Palmitoyltransferase akr1 (729 aa).

Residues 1-11 (MVHHDGADAHA) show a composition bias toward basic and acidic residues. The segment at 1-28 (MVHHDGADAHAGHAAPAQPPMKSDTATP) is disordered. The Cytoplasmic portion of the chain corresponds to 1-297 (MVHHDGADAH…DRRSFMTKFT (297 aa)). ANK repeat units follow at residues 76–105 (EGIT…EINK), 110–139 (SVAT…DPLI), 143–172 (QGYN…PVDV), 176–205 (YGHT…SVHA), and 209–238 (QGFT…DRFA). The next 2 helical transmembrane spans lie at 298–318 (FLWP…MPVF) and 319–339 (VGIP…QQVI). The Cytoplasmic portion of the chain corresponds to 340-354 (AYAPPDMRQLQKTPW). The helical transmembrane segment at 355–375 (MAGIFAGSLFLCIMNWLLHIF) threads the bilayer. The Lumenal segment spans residues 376 to 383 (GSTMFGQD). A helical transmembrane segment spans residues 384-404 (SAVIPNLLFAFFISMTIWFYI). The Cytoplasmic portion of the chain corresponds to 405–483 (RCMVDDPGFV…YNCIGVNNHR (79 aa)). One can recognise a DHHC domain in the interval 440–490 (NFCVTCMIRTPLRSKHCRRCQRCVAKHDHHCPWVYNCIGVNNHRHFFFYLI). Cysteine 470 acts as the S-palmitoyl cysteine intermediate in catalysis. A helical transmembrane segment spans residues 484-504 (HFFFYLINLTLSVVTYDWLTY). The Lumenal portion of the chain corresponds to 505–534 (RYLSTLSETASDECNILAPSLCRIVNADTY). Residues 535 to 555 (SLLTAIWASLQLTWVSMLLFV) form a helical membrane-spanning segment. Residues 556–729 (QFVQVSSAMT…GYESVAGEEV (174 aa)) are Cytoplasmic-facing. Disordered stretches follow at residues 587 to 620 (STGA…HGHN) and 709 to 729 (TSGG…GEEV). A compositionally biased stretch (pro residues) spans 592–603 (LNPPSLPAPGPS). Residues 611–620 (HGGRHAHGHN) are compositionally biased toward basic residues.

The protein belongs to the DHHC palmitoyltransferase family. AKR/ZDHHC17 subfamily.

It is found in the early endosome membrane. The protein resides in the golgi apparatus membrane. The enzyme catalyses L-cysteinyl-[protein] + hexadecanoyl-CoA = S-hexadecanoyl-L-cysteinyl-[protein] + CoA. Its function is as follows. Palmitoyltransferase specific for casein kinase 1. The polypeptide is Palmitoyltransferase akr1 (ptr-1) (Neurospora crassa (strain ATCC 24698 / 74-OR23-1A / CBS 708.71 / DSM 1257 / FGSC 987)).